Consider the following 152-residue polypeptide: Xanthine-guanine phosphoribosyltransferase (152 aa).

Residues 37–38 (RG), R69, and 88–96 (DDLVDSGDT) each bind 5-phospho-alpha-D-ribose 1-diphosphate. A GMP-binding site is contributed by R69. Residue D89 coordinates Mg(2+). Guanine is bound by residues D92 and I135. Residues D92 and I135 each coordinate xanthine. Residues 92–96 (DSGDT) and 134–135 (WI) each bind GMP.

This sequence belongs to the purine/pyrimidine phosphoribosyltransferase family. XGPT subfamily. As to quaternary structure, homotetramer. The cofactor is Mg(2+).

Its subcellular location is the cell inner membrane. It carries out the reaction GMP + diphosphate = guanine + 5-phospho-alpha-D-ribose 1-diphosphate. The enzyme catalyses XMP + diphosphate = xanthine + 5-phospho-alpha-D-ribose 1-diphosphate. The catalysed reaction is IMP + diphosphate = hypoxanthine + 5-phospho-alpha-D-ribose 1-diphosphate. It participates in purine metabolism; GMP biosynthesis via salvage pathway; GMP from guanine: step 1/1. It functions in the pathway purine metabolism; XMP biosynthesis via salvage pathway; XMP from xanthine: step 1/1. Its function is as follows. Purine salvage pathway enzyme that catalyzes the transfer of the ribosyl-5-phosphate group from 5-phospho-alpha-D-ribose 1-diphosphate (PRPP) to the N9 position of the 6-oxopurines guanine and xanthine to form the corresponding ribonucleotides GMP (guanosine 5'-monophosphate) and XMP (xanthosine 5'-monophosphate), with the release of PPi. To a lesser extent, also acts on hypoxanthine. The sequence is that of Xanthine-guanine phosphoribosyltransferase from Aliivibrio salmonicida (strain LFI1238) (Vibrio salmonicida (strain LFI1238)).